The following is a 423-amino-acid chain: Probable peptidoglycan glycosyltransferase FtsW (423 aa).

Residues 1-53 lie on the Cytoplasmic side of the membrane; it reads MNLKEKLFPENRLGLNRFWNFSRGGIDNFRTGLRDAVSGVEQTRSRMMEYDQL. A helical transmembrane segment spans residues 54 to 74; that stretch reads LVWAILSLMLIGLVMVYSASI. The Periplasmic segment spans residues 75-88; it reads TLADGPKYANYSSN. Residues 89 to 109 traverse the membrane as a helical segment; it reads FFLIRHMISLAIAIGVGIWAF. At 110–119 the chain is on the cytoplasmic side; the sequence is KIPTKVWDRY. A helical transmembrane segment spans residues 120–140; it reads SPVIFGITVLLLIAVLIPGVG. At 141-149 the chain is on the periplasmic side; it reads RGVNGAKRW. Residues 150–170 traverse the membrane as a helical segment; sequence IPLGLMNFQSSELMKFAAVIF. Topologically, residues 171-184 are cytoplasmic; sequence AASYTVQRQEYLHS. The helical transmembrane segment at 185–205 threads the bilayer; that stretch reads FVKGMLPMGIAVALVGGLLMA. At 206–208 the chain is on the periplasmic side; the sequence is EPD. The chain crosses the membrane as a helical span at residues 209–229; it reads MGAFVVVALIAFGILFLGGIN. Topologically, residues 230-231 are cytoplasmic; that stretch reads AK. The chain crosses the membrane as a helical span at residues 232–252; that stretch reads LFGGLIAVGLMSGATMIAFSP. At 253 to 310 the chain is on the periplasmic side; the sequence is LRRGRMLAFMDPWQVDNAANKGYQLTHSLMAFGRGEWFGTGLGGSVEKLHYLPEAHTD. A helical transmembrane segment spans residues 311–331; that stretch reads FIMAVIGEELGFVGVVVMIFL. Residues 332–359 are Cytoplasmic-facing; the sequence is FYWIVRRAFLIGRTALQLDRSFAGLAAK. A helical transmembrane segment spans residues 360–380; that stretch reads GVAIWIGWQAFINMGVNLGLL. Residues 381–386 lie on the Periplasmic side of the membrane; the sequence is PTKGLT. A helical membrane pass occupies residues 387-407; sequence LPLVSYGGSGILMNAVAMAML. At 408–423 the chain is on the cytoplasmic side; sequence LRIDFENRILMRGGKL.

It belongs to the SEDS family. FtsW subfamily.

The protein resides in the cell inner membrane. It carries out the reaction [GlcNAc-(1-&gt;4)-Mur2Ac(oyl-L-Ala-gamma-D-Glu-L-Lys-D-Ala-D-Ala)](n)-di-trans,octa-cis-undecaprenyl diphosphate + beta-D-GlcNAc-(1-&gt;4)-Mur2Ac(oyl-L-Ala-gamma-D-Glu-L-Lys-D-Ala-D-Ala)-di-trans,octa-cis-undecaprenyl diphosphate = [GlcNAc-(1-&gt;4)-Mur2Ac(oyl-L-Ala-gamma-D-Glu-L-Lys-D-Ala-D-Ala)](n+1)-di-trans,octa-cis-undecaprenyl diphosphate + di-trans,octa-cis-undecaprenyl diphosphate + H(+). Its pathway is cell wall biogenesis; peptidoglycan biosynthesis. In terms of biological role, peptidoglycan polymerase that is essential for cell division. The chain is Probable peptidoglycan glycosyltransferase FtsW from Polynucleobacter necessarius subsp. necessarius (strain STIR1).